A 161-amino-acid chain; its full sequence is N5-carboxyaminoimidazole ribonucleotide mutase (161 aa).

3 residues coordinate substrate: Ser-9, Asp-12, and Arg-39.

It belongs to the AIR carboxylase family. Class I subfamily.

The enzyme catalyses 5-carboxyamino-1-(5-phospho-D-ribosyl)imidazole + H(+) = 5-amino-1-(5-phospho-D-ribosyl)imidazole-4-carboxylate. It participates in purine metabolism; IMP biosynthesis via de novo pathway; 5-amino-1-(5-phospho-D-ribosyl)imidazole-4-carboxylate from 5-amino-1-(5-phospho-D-ribosyl)imidazole (N5-CAIR route): step 2/2. Functionally, catalyzes the conversion of N5-carboxyaminoimidazole ribonucleotide (N5-CAIR) to 4-carboxy-5-aminoimidazole ribonucleotide (CAIR). This chain is N5-carboxyaminoimidazole ribonucleotide mutase, found in Vibrio vulnificus (strain CMCP6).